The primary structure comprises 212 residues: Guanylate kinase (212 aa).

Residues 5–187 (GILCIISAPS…ALMHLQSIML (183 aa)) form the Guanylate kinase-like domain. An ATP-binding site is contributed by 12–19 (APSGTGKS).

It belongs to the guanylate kinase family.

It is found in the cytoplasm. It carries out the reaction GMP + ATP = GDP + ADP. In terms of biological role, essential for recycling GMP and indirectly, cGMP. The chain is Guanylate kinase from Blochmanniella pennsylvanica (strain BPEN).